A 236-amino-acid chain; its full sequence is Small ribosomal subunit protein uS2c (236 aa).

It belongs to the universal ribosomal protein uS2 family.

The protein localises to the plastid. It is found in the chloroplast. This Physcomitrium patens (Spreading-leaved earth moss) protein is Small ribosomal subunit protein uS2c (rps2).